The sequence spans 142 residues: Pro-vaccinia growth factor (142 aa).

The N-terminal stretch at 1–18 (MSMKYLMLLFAAMIIRSF) is a signal peptide. At 19–100 (ADSGNAIETT…SENPNTTTSY (82 aa)) the chain is on the extracellular side. N34 carries N-linked (GlcNAc...) asparagine; by host glycosylation. The EGF-like domain occupies 41-81 (AIRLCGPEGDGYCLHGDCIHARDIDGMYCRCSHGYTGIRCQ). Intrachain disulfides connect C45–C58, C53–C69, and C71–C80. N-linked (GlcNAc...) asparagine; by host glycosylation occurs at N95. The helical transmembrane segment at 101 to 121 (IPSPGIMLVLVGIIIIITCCL) threads the bilayer. Over 122–142 (LSVYRFTRRTNKLPLQDMVVP) the chain is Cytoplasmic.

The protein belongs to the orthopoxvirus OPG019 family. As to quaternary structure, vaccinia growth factor interacts with host EGFR and promotes EGFR dimerization.

Its subcellular location is the host membrane. It is found in the secreted. Its function is as follows. Stimulates cellular proliferation (hyperplasia)and mobility around infected cells to promote rapid and efficient spread of infection. This effect is beneficial for virus replication in vivo, because poxviruses replicate possibly better in proliferating cells than in quiescent cells. Acts by binding host EGFR, inducing its dimerization, autophosphorylation and leading to activation of several cellular pathways regulating cell proliferation or cell survival. The activation by host EGFR of mitogen activated protein kinases (MAPK) and extracellular-signal regulated kinases (ERK) are essential for the positive effect of vaccinia growth factor on poxvirus virulence in vivo. In Vaccinia virus (strain Copenhagen) (VACV), this protein is Pro-vaccinia growth factor (OPG019).